We begin with the raw amino-acid sequence, 216 residues long: Cytochrome c oxidase subunit 2 (216 aa).

The Mitochondrial intermembrane portion of the chain corresponds to 1-8 (LGLQNATS). Residues 9 to 39 (PIMEELIAFHDHALMIIFLISSLVLYIISLM) traverse the membrane as a helical segment. At 40-53 (LTTKLTHTSTMNAQ) the chain is on the mitochondrial matrix side. Residues 54-81 (EIEMIWTILPAVILIMIALPSLRILYMT) traverse the membrane as a helical segment. The Mitochondrial intermembrane portion of the chain corresponds to 82 to 216 (DEFNKPYLTL…FIYFQDFEVW (135 aa)). Residues His-155, Cys-190, Glu-192, Cys-194, His-198, and Met-201 each contribute to the Cu cation site. A Mg(2+)-binding site is contributed by Glu-192.

Belongs to the cytochrome c oxidase subunit 2 family. As to quaternary structure, component of the cytochrome c oxidase (complex IV, CIV), a multisubunit enzyme composed of 14 subunits. The complex is composed of a catalytic core of 3 subunits MT-CO1, MT-CO2 and MT-CO3, encoded in the mitochondrial DNA, and 11 supernumerary subunits COX4I, COX5A, COX5B, COX6A, COX6B, COX6C, COX7A, COX7B, COX7C, COX8 and NDUFA4, which are encoded in the nuclear genome. The complex exists as a monomer or a dimer and forms supercomplexes (SCs) in the inner mitochondrial membrane with NADH-ubiquinone oxidoreductase (complex I, CI) and ubiquinol-cytochrome c oxidoreductase (cytochrome b-c1 complex, complex III, CIII), resulting in different assemblies (supercomplex SCI(1)III(2)IV(1) and megacomplex MCI(2)III(2)IV(2)). Found in a complex with TMEM177, COA6, COX18, COX20, SCO1 and SCO2. Interacts with TMEM177 in a COX20-dependent manner. Interacts with COX20. Interacts with COX16. The cofactor is Cu cation.

It is found in the mitochondrion inner membrane. It carries out the reaction 4 Fe(II)-[cytochrome c] + O2 + 8 H(+)(in) = 4 Fe(III)-[cytochrome c] + 2 H2O + 4 H(+)(out). Its function is as follows. Component of the cytochrome c oxidase, the last enzyme in the mitochondrial electron transport chain which drives oxidative phosphorylation. The respiratory chain contains 3 multisubunit complexes succinate dehydrogenase (complex II, CII), ubiquinol-cytochrome c oxidoreductase (cytochrome b-c1 complex, complex III, CIII) and cytochrome c oxidase (complex IV, CIV), that cooperate to transfer electrons derived from NADH and succinate to molecular oxygen, creating an electrochemical gradient over the inner membrane that drives transmembrane transport and the ATP synthase. Cytochrome c oxidase is the component of the respiratory chain that catalyzes the reduction of oxygen to water. Electrons originating from reduced cytochrome c in the intermembrane space (IMS) are transferred via the dinuclear copper A center (CU(A)) of subunit 2 and heme A of subunit 1 to the active site in subunit 1, a binuclear center (BNC) formed by heme A3 and copper B (CU(B)). The BNC reduces molecular oxygen to 2 water molecules using 4 electrons from cytochrome c in the IMS and 4 protons from the mitochondrial matrix. The protein is Cytochrome c oxidase subunit 2 (MT-CO2) of Callimico goeldii (Goeldi's marmoset).